Here is a 312-residue protein sequence, read N- to C-terminus: Acetylglutamate kinase (312 aa).

Substrate-binding positions include 69–70 (GG), arginine 91, and asparagine 191.

This sequence belongs to the acetylglutamate kinase family. ArgB subfamily.

Its subcellular location is the cytoplasm. It carries out the reaction N-acetyl-L-glutamate + ATP = N-acetyl-L-glutamyl 5-phosphate + ADP. It functions in the pathway amino-acid biosynthesis; L-arginine biosynthesis; N(2)-acetyl-L-ornithine from L-glutamate: step 2/4. In terms of biological role, catalyzes the ATP-dependent phosphorylation of N-acetyl-L-glutamate. The sequence is that of Acetylglutamate kinase from Streptomyces griseus subsp. griseus (strain JCM 4626 / CBS 651.72 / NBRC 13350 / KCC S-0626 / ISP 5235).